Here is a 1196-residue protein sequence, read N- to C-terminus: FIP1[V]-like protein (1196 aa).

Disordered regions lie at residues 1 to 102 (MEED…TIPG), 117 to 248 (GVSQ…SHGY), 268 to 300 (GAAS…WRPL), 413 to 472 (GAQG…PRMR), and 485 to 1174 (SHED…IEGP). Residues 18 to 31 (FQPPVVLPPPPPLP) show a composition bias toward pro residues. A compositionally biased stretch (polar residues) spans 117–126 (GVSQVTTRIE). The span at 129 to 141 (VGGGGDGGYGGQG) shows a compositional bias: gly residues. 2 stretches are compositionally biased toward acidic residues: residues 142–154 (EGDD…EDDL) and 179–190 (NEDDDDEDDEDP). The segment covering 226–236 (AGKGSGPGGAT) has biased composition (gly residues). Residues 268–278 (GAASVGGPSSG) are compositionally biased toward low complexity. Residues 518-548 (KRPDTESAEHSPAQDEPHKNLLKKQDDEISR) show a composition bias toward basic and acidic residues. Residues 549–561 (STDSGQSFRSSSP) show a composition bias toward polar residues. Composition is skewed to basic and acidic residues over residues 565-592 (RGTR…EELK) and 608-641 (GESK…DKHS). Residues 643–657 (RPANNRKQYDNNAPH) are compositionally biased toward polar residues. Basic and acidic residues-rich tracts occupy residues 661-673 (KNQD…ERTR), 699-802 (SRED…EKNE), 810-918 (SMSR…DTLR), 925-945 (RRDY…DFSA), and 953-971 (NEKK…KFID). 2 short sequence motifs (nuclear localization signal) span residues 704–711 (DKRKERDV) and 734–741 (RKRDREDD). Polar residues predominate over residues 998–1021 (ESLSKQGEQNGSSVVTGSKGTNDA). Composition is skewed to basic and acidic residues over residues 1046–1071 (DEIH…EDAV), 1103–1137 (KSRD…TVEK), and 1151–1163 (TEKD…KMES).

The protein belongs to the FIP1 family. As to quaternary structure, component of the cleavage and polyadenylation specificity factor (CPSF) complex. Forms a complex with cleavage and polyadenylation specificity factor (CPSF) subunits CFIS1, CFIS2, CPSF30, CSTF50, CSTF64, CSTF77, FIPS3, PABN1, PABN2, PABN3, PAPS4, CFIM25 and PABN1. Binds RNA. In terms of tissue distribution, expressed in leaves, stems, flower tissues and roots.

It is found in the nucleus. Essential gene. Component of the cleavage and polyadenylation specificity factor (CPSF) complex that plays a key role in pre-mRNA 3'-end formation, recognizing the AAUAAA signal sequence and interacting with poly(A) polymerase and other factors to bring about cleavage and poly(A) addition. FIP1L1 contributes to poly(A) site recognition and stimulates poly(A) addition. Binds to U-rich RNA sequence elements surrounding the poly(A) site. May act to tether poly(A) polymerase to the CPSF complex. The protein is FIP1[V]-like protein of Arabidopsis thaliana (Mouse-ear cress).